The chain runs to 1013 residues: Nucleotide-binding oligomerization domain-containing protein 2 (1013 aa).

CARD domains follow at residues 1-82 and 107-178; these read MCSQ…AVQE and LQSH…HVQK. The ATG16L1-binding motif signature appears at 36-50; the sequence is WEVLSWEDYEGLRLV. Residues T212, Y225, T226, G275, S276, G277, K278, S279, and T280 each coordinate ADP. Residues 214 to 247 are required for CARD9 binding; that stretch reads DGAENLCLEDIYTENTLEVRTEVGMAGPLHKSPA. Residues 266–402 form the NACHT domain; the sequence is DTVLVVGEAG…RKVLTSRPDA (137 aa). 272–279 is a binding site for ATP; it reads GEAGSGKS. Residue C368 is the site of S-palmitoyl cysteine attachment. Position 576 (H576) interacts with ADP. LRR repeat units lie at residues 764–785, 789–812, 817–838, 845–857, 873–893, 901–922, 929–949, 957–978, and 985–1005; these read RPVALQLDHNSVGDIGVEQLLP, ACKALYLRDNNISDRGICKLIEHA, QLQKLALFNNKLTDGCAHSVAQ, NFLALRLGNNHIT, SLQFLGFWGNKVGDKGAQALA, SLKWLSLVGNNIGSVGAQALAS, ALEELCLEENHLQDAGVCSLA, SLKVLKLSNNCITFVGAEALLQ, and TILEVWLRGNPFSPEEMEALS.

Belongs to the NOD1-NOD2 family. In terms of assembly, homooligomer: homooligomerizes following muramyl dipeptide (MDP)-binding, promoting RIPK2 recruitment. Interacts (via CARD domain) with RIPK2 (via CARD domain). Following RIPK2 recruitment, RIPK2 homooligomerizes via its CARD domain and forms long filaments named RIPosomes. Interacts (via CARD domain) with ubiquitin; inhibiting interaction with RIPK2. Component of a signaling complex consisting of ARHGEF2, NOD2 and RIPK2. Interacts with ANKRD17 (via N-terminus). Interacts with HSPA1A; the interaction enhances NOD2 stability. Interacts (via both CARD domains) with HSP90; the interaction enhances NOD2 stability. Interacts (via CARD domain) with SOCS3; the interaction promotes NOD2 degradation. Interacts (via CARD domain) with ERBIN; the interaction inhibits activation of NOD2. Interacts with MAPKBP1; the interaction is enhanced in the presence of muramyl dipeptide (MDP) and inhibits NOD2 homooligomerization and activation. Interacts with INAVA; the interaction takes place upon Pattern recognition receptor (PRR) stimulation. Interacts (via NACHT domain) with CARD9. Interacts (via CARD domain) with CASP1; this interaction leads to IL1B processing. Also interacts with CASP4. Interacts with NLRP1; this interaction is enhanced in the presence of muramyl dipeptide (MDP) and leads to increased IL1B release. Interacts with NLRP12; this interaction promotes degradation of NOD2 through the ubiquitin-proteasome pathway. Interacts with ANKHD1, C10orf67, CHMP5, DOCK7, ENTR1, KRT15, LDOC1, PPP1R12C, PPP2R3B, TRIM41 and VIM. Interacts with MAVS; interaction takes place following single-stranded RNA (ssRNA)-binding. Interacts with ATG16L1. Interacts with IRGM; promoting IRGM 'Lys-63'-linked polyubiquitination, which is required for interactions with the core autophagy factors. Palmitoylated by ZDHHC5; palmitoylation is required for proper recruitment to the bacterial entry site and hence for proper signaling upon cognate peptidoglycan detection. Palmitoylation promotes localization to the cell membrane. Palmitoylation protects from SQSTM1/p62-dependent autophagic degradation. In terms of processing, polyubiquitinated by TRIM27, leading to proteasome-mediated degradation. Polyubiquitinated and degraded following muramyl dipeptide (MDP) stimulation, conferring MDP tolerance and preventing septic shock. Post-translationally, degraded via selective autophagy following interaction with IRGM. IRGM promotes NOD2-RIPK2 RIPosome recruitment to autophagosome membranes, promoting their SQSTM1/p62-dependent autophagic degradation. O-glycosylated by OGT, O-GlcNAcylation increases protein stability.

Its subcellular location is the cell membrane. The protein resides in the basolateral cell membrane. It localises to the cytoplasm. It is found in the mitochondrion. ADP-binding promotes an inactive closed conformation. Functionally, pattern recognition receptor (PRR) that detects bacterial peptidoglycan fragments and other danger signals and plays an important role in gastrointestinal immunity. Specifically activated by muramyl dipeptide (MDP), a fragment of bacterial peptidoglycan found in every bacterial peptidoglycan type. NOD2 specifically recognizes and binds 6-O-phospho-MDP, the phosphorylated form of MDP, which is generated by NAGK. 6-O-phospho-MDP-binding triggers oligomerization that facilitates the binding and subsequent activation of the proximal adapter receptor-interacting RIPK2. Following recruitment, RIPK2 undergoes 'Met-1'- (linear) and 'Lys-63'-linked polyubiquitination by E3 ubiquitin-protein ligases XIAP, BIRC2, BIRC3 and the LUBAC complex, becoming a scaffolding protein for downstream effectors, triggering activation of the NF-kappa-B and MAP kinases signaling. This in turn leads to the transcriptional activation of hundreds of genes involved in immune response. Its ability to detect bacterial MDP plays a central role in maintaining the equilibrium between intestinal microbiota and host immune responses to control inflammation. An imbalance in this relationship results in dysbiosis, whereby pathogenic bacteria prevail on commensals, causing damage in the intestinal epithelial barrier as well as allowing bacterial invasion and inflammation. Acts as a regulator of appetite by sensing MDP in a subset of brain neurons: microbiota-derived MDP reach the brain, where they bind and activate NOD2 in inhibitory hypothalamic neurons, decreasing neuronal activity, thereby regulating satiety and body temperature. NOD2-dependent MDP-sensing of bacterial cell walls in the intestinal epithelial compartment contributes to sustained postnatal growth upon undernutrition. Also plays a role in antiviral response by acting as a sensor of single-stranded RNA (ssRNA) from viruses: upon ssRNA-binding, interacts with MAVS, leading to activation of interferon regulatory factor-3/IRF3 and expression of type I interferon. Also acts as a regulator of autophagy in dendritic cells via its interaction with ATG16L1, possibly by recruiting ATG16L1 at the site of bacterial entry. NOD2 activation in the small intestine crypt also contributes to intestinal stem cells survival and function: acts by promoting mitophagy via its association with ATG16L1. In addition to its main role in innate immunity, also regulates the adaptive immune system by acting as regulator of helper T-cell and regulatory T-cells (Tregs). Besides recognizing pathogens, also involved in the endoplasmic reticulum stress response: acts by sensing and binding to the cytosolic metabolite sphingosine-1-phosphate generated in response to endoplasmic reticulum stress, initiating an inflammation process that leads to activation of the NF-kappa-B and MAP kinases signaling. May also be involved in NLRP1 activation following activation by MDP, leading to CASP1 activation and IL1B release in macrophages. This Oryctolagus cuniculus (Rabbit) protein is Nucleotide-binding oligomerization domain-containing protein 2.